Reading from the N-terminus, the 199-residue chain is Probable GTP-binding protein EngB (199 aa).

The region spanning 21 to 196 is the EngB-type G domain; sequence TKPEYAFIGR…LTYIDEINKQ (176 aa). Residues 29 to 36, 56 to 60, 74 to 77, 141 to 144, and 175 to 177 contribute to the GTP site; these read GRSNVGKS, GKTQL, DLPG, TKID, and TSS. Mg(2+) is bound by residues serine 36 and threonine 58.

The protein belongs to the TRAFAC class TrmE-Era-EngA-EngB-Septin-like GTPase superfamily. EngB GTPase family. Mg(2+) is required as a cofactor.

Necessary for normal cell division and for the maintenance of normal septation. This is Probable GTP-binding protein EngB from Cytophaga hutchinsonii (strain ATCC 33406 / DSM 1761 / CIP 103989 / NBRC 15051 / NCIMB 9469 / D465).